The following is a 321-amino-acid chain: Glucokinase (321 aa).

8–13 lines the ATP pocket; that stretch reads GDVGGT.

This sequence belongs to the bacterial glucokinase family.

The protein localises to the cytoplasm. It catalyses the reaction D-glucose + ATP = D-glucose 6-phosphate + ADP + H(+). In Shigella dysenteriae serotype 1 (strain Sd197), this protein is Glucokinase.